The chain runs to 146 residues: Hemoglobin subunit beta (146 aa).

Ala1 is subject to N-acetylalanine. The Globin domain occupies 2–146 (SFDPHEKQLI…VAAALAAEYH (145 aa)). The heme b site is built by His63 and His92.

It belongs to the globin family. As to quaternary structure, heterotetramer of two alpha chains and two beta chains. In terms of tissue distribution, red blood cells.

Functionally, involved in oxygen transport from the lung to the various peripheral tissues. The protein is Hemoglobin subunit beta (HBB) of Crocodylus niloticus (Nile crocodile).